Here is a 128-residue protein sequence, read N- to C-terminus: Large ribosomal subunit protein bL12 (128 aa).

It belongs to the bacterial ribosomal protein bL12 family. As to quaternary structure, homodimer. Part of the ribosomal stalk of the 50S ribosomal subunit. Forms a multimeric L10(L12)X complex, where L10 forms an elongated spine to which 2 to 4 L12 dimers bind in a sequential fashion. Binds GTP-bound translation factors.

Its function is as follows. Forms part of the ribosomal stalk which helps the ribosome interact with GTP-bound translation factors. Is thus essential for accurate translation. The sequence is that of Large ribosomal subunit protein bL12 from Acidithiobacillus ferrooxidans (strain ATCC 23270 / DSM 14882 / CIP 104768 / NCIMB 8455) (Ferrobacillus ferrooxidans (strain ATCC 23270)).